A 239-amino-acid polypeptide reads, in one-letter code: tRNA (guanine-N(1)-)-methyltransferase (239 aa).

S-adenosyl-L-methionine contacts are provided by residues glycine 109 and 128–133 (IGDYVL).

Belongs to the RNA methyltransferase TrmD family. As to quaternary structure, homodimer.

It is found in the cytoplasm. The enzyme catalyses guanosine(37) in tRNA + S-adenosyl-L-methionine = N(1)-methylguanosine(37) in tRNA + S-adenosyl-L-homocysteine + H(+). In terms of biological role, specifically methylates guanosine-37 in various tRNAs. This chain is tRNA (guanine-N(1)-)-methyltransferase, found in Thermus thermophilus (strain ATCC BAA-163 / DSM 7039 / HB27).